The following is a 156-amino-acid chain: 6,7-dimethyl-8-ribityllumazine synthase (156 aa).

Residues phenylalanine 22, 57 to 59, and 81 to 83 each bind 5-amino-6-(D-ribitylamino)uracil; these read AYE and SVI. (2S)-2-hydroxy-3-oxobutyl phosphate is bound at residue 86–87; it reads GT. The Proton donor role is filled by histidine 89. Residue phenylalanine 114 participates in 5-amino-6-(D-ribitylamino)uracil binding. (2S)-2-hydroxy-3-oxobutyl phosphate is bound at residue arginine 128.

The protein belongs to the DMRL synthase family. Forms an icosahedral capsid composed of 60 subunits, arranged as a dodecamer of pentamers.

The catalysed reaction is (2S)-2-hydroxy-3-oxobutyl phosphate + 5-amino-6-(D-ribitylamino)uracil = 6,7-dimethyl-8-(1-D-ribityl)lumazine + phosphate + 2 H2O + H(+). It functions in the pathway cofactor biosynthesis; riboflavin biosynthesis; riboflavin from 2-hydroxy-3-oxobutyl phosphate and 5-amino-6-(D-ribitylamino)uracil: step 1/2. Catalyzes the formation of 6,7-dimethyl-8-ribityllumazine by condensation of 5-amino-6-(D-ribitylamino)uracil with 3,4-dihydroxy-2-butanone 4-phosphate. This is the penultimate step in the biosynthesis of riboflavin. In Photobacterium leiognathi, this protein is 6,7-dimethyl-8-ribityllumazine synthase.